Here is a 795-residue protein sequence, read N- to C-terminus: Protein translocase subunit SecA 2 (795 aa).

Residues Gln-84, 102-106, and Asp-496 each bind ATP; that span reads GEGKT.

It belongs to the SecA family. As to quaternary structure, monomer and homodimer. Part of the essential Sec protein translocation apparatus which comprises SecA, SecYEG and auxiliary proteins SecDF. Other proteins may also be involved.

The protein resides in the cell membrane. It is found in the cytoplasm. The enzyme catalyses ATP + H2O + cellular proteinSide 1 = ADP + phosphate + cellular proteinSide 2.. Functionally, part of the Sec protein translocase complex. Interacts with the SecYEG preprotein conducting channel. Has a central role in coupling the hydrolysis of ATP to the transfer of proteins into and across the cell membrane, serving as an ATP-driven molecular motor driving the stepwise translocation of polypeptide chains across the membrane. This chain is Protein translocase subunit SecA 2, found in Streptococcus agalactiae serotype V (strain ATCC BAA-611 / 2603 V/R).